The primary structure comprises 402 residues: BTB and MATH domain-containing protein 40 (402 aa).

The segment at 1-25 (MSDRHLYGSDHSYLSSKPSCSSCRR) is disordered. The segment covering 15–25 (SSKPSCSSCRR) has biased composition (low complexity). The MATH domain maps to 43-177 (VLTQRWTVCN…DKSLVISCHI (135 aa)). The region spanning 222-295 (TDMTIVAGPL…IYAGVIKSDI (74 aa)) is the BTB domain.

In terms of assembly, interacts with cul-3.

It functions in the pathway protein modification; protein ubiquitination. Probable substrate-specific adapter of an E3 ubiquitin-protein ligase complex which mediates the ubiquitination and subsequent proteasomal degradation of target proteins. The polypeptide is BTB and MATH domain-containing protein 40 (bath-40) (Caenorhabditis elegans).